The chain runs to 322 residues: HPr kinase/phosphorylase (322 aa).

Active-site residues include His146 and Lys167. 161 to 168 (GDSGLGKS) is an ATP binding site. Residue Ser168 participates in Mg(2+) binding. The active-site Proton acceptor; for phosphorylation activity. Proton donor; for dephosphorylation activity is Asp185. Residues 209 to 218 (LEVRGLGLLD) form an important for the catalytic mechanism of both phosphorylation and dephosphorylation region. Residue Glu210 participates in Mg(2+) binding. Residue Arg250 is part of the active site. The important for the catalytic mechanism of dephosphorylation stretch occupies residues 271–276 (QVAAGR).

The protein belongs to the HPrK/P family. As to quaternary structure, homohexamer. Requires Mg(2+) as cofactor.

The enzyme catalyses [HPr protein]-L-serine + ATP = [HPr protein]-O-phospho-L-serine + ADP + H(+). The catalysed reaction is [HPr protein]-O-phospho-L-serine + phosphate + H(+) = [HPr protein]-L-serine + diphosphate. Its function is as follows. Catalyzes the ATP- as well as the pyrophosphate-dependent phosphorylation of a specific serine residue in HPr, a phosphocarrier protein of the phosphoenolpyruvate-dependent sugar phosphotransferase system (PTS). HprK/P also catalyzes the pyrophosphate-producing, inorganic phosphate-dependent dephosphorylation (phosphorolysis) of seryl-phosphorylated HPr (P-Ser-HPr). The sequence is that of HPr kinase/phosphorylase from Burkholderia multivorans (strain ATCC 17616 / 249).